Consider the following 199-residue polypeptide: V-type proton ATPase subunit E (199 aa).

The protein belongs to the V-ATPase E subunit family.

Produces ATP from ADP in the presence of a proton gradient across the membrane. This is V-type proton ATPase subunit E from Clostridium botulinum (strain 657 / Type Ba4).